We begin with the raw amino-acid sequence, 343 residues long: Vacuolar membrane protein Kpol_1003p17 (343 aa).

Residues 45–65 (TTDTSGTSTSSRDVSSGQSTL) are disordered. Residues 101-121 (FIAVGSIIGGIFGGVLIWWMI) traverse the membrane as a helical segment. The disordered stretch occupies residues 235-343 (EVLQQQRQRR…YLDDMLENDN (109 aa)). Positions 254–264 (ELPSTPPSNFK) are enriched in polar residues. Basic and acidic residues predominate over residues 269 to 280 (KPERSASPERKS). Over residues 281–290 (RSPIRQHRKN) the composition is skewed to basic residues.

It belongs to the PRM5 family.

It is found in the vacuole membrane. The chain is Vacuolar membrane protein Kpol_1003p17 from Vanderwaltozyma polyspora (strain ATCC 22028 / DSM 70294 / BCRC 21397 / CBS 2163 / NBRC 10782 / NRRL Y-8283 / UCD 57-17) (Kluyveromyces polysporus).